Consider the following 474-residue polypeptide: Tubulin gamma-2 chain (474 aa).

Position 142-148 (142-148 (AGGTGSG)) interacts with GTP.

The protein belongs to the tubulin family. Gamma-tubulin complex is composed of gamma-tubulin and GCP proteins.

The protein resides in the cytoplasm. Its subcellular location is the cytoskeleton. The protein localises to the microtubule organizing center. It localises to the nucleus. It is found in the cell cortex. Its function is as follows. Tubulin is the major constituent of microtubules. The gamma chain is found at microtubule organizing centers (MTOC) such as the spindle poles, suggesting that it is involved in the minus-end nucleation of microtubule assembly. Functionally, gamma-tubulin complex is essential for the control of microtubular network remodeling in the course of initiation and development of giant-feeding cells, and for the successful reproduction of nematodes (e.g. Meloidogyne spp.) in their plant hosts. The chain is Tubulin gamma-2 chain (TUBG2) from Arabidopsis thaliana (Mouse-ear cress).